The primary structure comprises 315 residues: Methionyl-tRNA formyltransferase (315 aa).

109 to 112 contacts (6S)-5,6,7,8-tetrahydrofolate; sequence SLLP.

Belongs to the Fmt family.

It catalyses the reaction L-methionyl-tRNA(fMet) + (6R)-10-formyltetrahydrofolate = N-formyl-L-methionyl-tRNA(fMet) + (6S)-5,6,7,8-tetrahydrofolate + H(+). Functionally, attaches a formyl group to the free amino group of methionyl-tRNA(fMet). The formyl group appears to play a dual role in the initiator identity of N-formylmethionyl-tRNA by promoting its recognition by IF2 and preventing the misappropriation of this tRNA by the elongation apparatus. This is Methionyl-tRNA formyltransferase from Lachnospira eligens (strain ATCC 27750 / DSM 3376 / VPI C15-48 / C15-B4) (Eubacterium eligens).